The chain runs to 355 residues: UDP-N-acetylglucosamine--N-acetylmuramyl-(pentapeptide) pyrophosphoryl-undecaprenol N-acetylglucosamine transferase (355 aa).

Residues Thr-11–Gly-13, Asn-123, Arg-162, Ser-185, Ile-239, Ala-258–Glu-263, and Gln-284 contribute to the UDP-N-acetyl-alpha-D-glucosamine site.

It belongs to the glycosyltransferase 28 family. MurG subfamily.

The protein resides in the cell inner membrane. It catalyses the reaction di-trans,octa-cis-undecaprenyl diphospho-N-acetyl-alpha-D-muramoyl-L-alanyl-D-glutamyl-meso-2,6-diaminopimeloyl-D-alanyl-D-alanine + UDP-N-acetyl-alpha-D-glucosamine = di-trans,octa-cis-undecaprenyl diphospho-[N-acetyl-alpha-D-glucosaminyl-(1-&gt;4)]-N-acetyl-alpha-D-muramoyl-L-alanyl-D-glutamyl-meso-2,6-diaminopimeloyl-D-alanyl-D-alanine + UDP + H(+). It participates in cell wall biogenesis; peptidoglycan biosynthesis. Its function is as follows. Cell wall formation. Catalyzes the transfer of a GlcNAc subunit on undecaprenyl-pyrophosphoryl-MurNAc-pentapeptide (lipid intermediate I) to form undecaprenyl-pyrophosphoryl-MurNAc-(pentapeptide)GlcNAc (lipid intermediate II). In Hydrogenovibrio crunogenus (strain DSM 25203 / XCL-2) (Thiomicrospira crunogena), this protein is UDP-N-acetylglucosamine--N-acetylmuramyl-(pentapeptide) pyrophosphoryl-undecaprenol N-acetylglucosamine transferase.